A 331-amino-acid polypeptide reads, in one-letter code: Anthranilate phosphoribosyltransferase (331 aa).

5-phospho-alpha-D-ribose 1-diphosphate-binding positions include Gly-79, 82-83 (GD), Ser-87, 89-92 (NIST), 107-115 (KHCNSSISG), and Ser-119. Gly-79 lines the anthranilate pocket. Position 91 (Ser-91) interacts with Mg(2+). Asn-110 contributes to the anthranilate binding site. Position 165 (Arg-165) interacts with anthranilate. Asp-223 and Glu-224 together coordinate Mg(2+).

It belongs to the anthranilate phosphoribosyltransferase family. As to quaternary structure, homodimer. It depends on Mg(2+) as a cofactor.

The catalysed reaction is N-(5-phospho-beta-D-ribosyl)anthranilate + diphosphate = 5-phospho-alpha-D-ribose 1-diphosphate + anthranilate. The protein operates within amino-acid biosynthesis; L-tryptophan biosynthesis; L-tryptophan from chorismate: step 2/5. In terms of biological role, catalyzes the transfer of the phosphoribosyl group of 5-phosphorylribose-1-pyrophosphate (PRPP) to anthranilate to yield N-(5'-phosphoribosyl)-anthranilate (PRA). This Buchnera aphidicola subsp. Melaphis rhois protein is Anthranilate phosphoribosyltransferase.